The following is a 141-amino-acid chain: Large ribosomal subunit protein uL11 (141 aa).

It belongs to the universal ribosomal protein uL11 family. In terms of assembly, part of the ribosomal stalk of the 50S ribosomal subunit. Interacts with L10 and the large rRNA to form the base of the stalk. L10 forms an elongated spine to which L12 dimers bind in a sequential fashion forming a multimeric L10(L12)X complex. In terms of processing, one or more lysine residues are methylated.

Functionally, forms part of the ribosomal stalk which helps the ribosome interact with GTP-bound translation factors. This Aster yellows witches'-broom phytoplasma (strain AYWB) protein is Large ribosomal subunit protein uL11.